The following is a 372-amino-acid chain: Saccharopine dehydrogenase [NAD(+), L-lysine-forming] (372 aa).

2 residues coordinate L-saccharopine: Arg-17 and Lys-76. The Proton acceptor role is filled by Lys-76. His-95 functions as the Proton donor in the catalytic mechanism. Gln-100 serves as a coordination point for L-saccharopine. Arg-129 is a binding site for NAD(+). L-saccharopine-binding residues include Arg-130 and Phe-134. NAD(+) contacts are provided by residues 202–203, Asp-226, Thr-230, Tyr-250, and Val-277; that span reads GR. Cys-204 and Cys-248 are oxidised to a cystine. 278–280 serves as a coordination point for L-saccharopine; it reads SAD. 317–320 serves as a coordination point for NAD(+); that stretch reads IDHL. A Microbody targeting signal motif is present at residues 370-372; sequence SKL.

The protein belongs to the AlaDH/PNT family. As to quaternary structure, monomer.

The protein resides in the peroxisome. The catalysed reaction is L-saccharopine + NAD(+) + H2O = L-lysine + 2-oxoglutarate + NADH + H(+). It functions in the pathway amino-acid biosynthesis; L-lysine biosynthesis via AAA pathway; L-lysine from L-alpha-aminoadipate (fungal route): step 3/3. Functionally, catalyzes the NAD(+)-dependent cleavage of saccharopine to L-lysine and 2-oxoglutarate, the final step in the alpha-aminoadipate (AAA) pathway for lysin biosynthesis. This chain is Saccharopine dehydrogenase [NAD(+), L-lysine-forming] (LYS1), found in Candida glabrata (strain ATCC 2001 / BCRC 20586 / JCM 3761 / NBRC 0622 / NRRL Y-65 / CBS 138) (Yeast).